Here is a 140-residue protein sequence, read N- to C-terminus: Large-conductance mechanosensitive channel 2 (140 aa).

A run of 3 helical transmembrane segments spans residues 8–28 (FISK…AAFG), 30–50 (IVDS…FGGL), and 81–101 (GSFI…FLMV).

The protein belongs to the MscL family. Homopentamer.

It localises to the cell inner membrane. In terms of biological role, channel that opens in response to stretch forces in the membrane lipid bilayer. May participate in the regulation of osmotic pressure changes within the cell. This chain is Large-conductance mechanosensitive channel 2, found in Mesorhizobium japonicum (strain LMG 29417 / CECT 9101 / MAFF 303099) (Mesorhizobium loti (strain MAFF 303099)).